The sequence spans 345 residues: MSKQSLSYKDAGVDINAGNTLVERIKSDVKRTTRPEVIGGLGGFGALCALPSKYKDPILVSGTDGVGTKLRLAIDLKKHDTIGVDLVAMCVNDLVVQGAEPLFFLDYYATGKLDVDVAADVIKGIADGCVQAGCALVGGETAEMPGMYHTGDYDLAGFCVGVVEKSEIIDGSNVKAGDALLALASSGPHSNGYSLIRKVIEVSGIDPTTAQLAEHSFAEQVLAPTKIYVKPVLQLIKHTDVHAICHLTGGGFWENIPRVLPSSVKAVINEKSWEWHPIFKWLQEQGNIDRYEMYRTFNCGVGMIIALPQEDVETALALLQQVGEKAWVIGKIEHANADEEKVVIC.

The protein belongs to the AIR synthase family.

The protein localises to the cytoplasm. The enzyme catalyses 2-formamido-N(1)-(5-O-phospho-beta-D-ribosyl)acetamidine + ATP = 5-amino-1-(5-phospho-beta-D-ribosyl)imidazole + ADP + phosphate + H(+). Its pathway is purine metabolism; IMP biosynthesis via de novo pathway; 5-amino-1-(5-phospho-D-ribosyl)imidazole from N(2)-formyl-N(1)-(5-phospho-D-ribosyl)glycinamide: step 2/2. The protein is Phosphoribosylformylglycinamidine cyclo-ligase of Histophilus somni (strain 2336) (Haemophilus somnus).